The chain runs to 958 residues: Glycine dehydrogenase (decarboxylating) (958 aa).

Lys708 bears the N6-(pyridoxal phosphate)lysine mark.

Belongs to the GcvP family. The glycine cleavage system is composed of four proteins: P, T, L and H. It depends on pyridoxal 5'-phosphate as a cofactor.

It catalyses the reaction N(6)-[(R)-lipoyl]-L-lysyl-[glycine-cleavage complex H protein] + glycine + H(+) = N(6)-[(R)-S(8)-aminomethyldihydrolipoyl]-L-lysyl-[glycine-cleavage complex H protein] + CO2. The glycine cleavage system catalyzes the degradation of glycine. The P protein binds the alpha-amino group of glycine through its pyridoxal phosphate cofactor; CO(2) is released and the remaining methylamine moiety is then transferred to the lipoamide cofactor of the H protein. In Proteus mirabilis (strain HI4320), this protein is Glycine dehydrogenase (decarboxylating).